The chain runs to 117 residues: Large ribosomal subunit protein uL18 (117 aa).

It belongs to the universal ribosomal protein uL18 family. In terms of assembly, part of the 50S ribosomal subunit; part of the 5S rRNA/L5/L18/L25 subcomplex. Contacts the 5S and 23S rRNAs.

Functionally, this is one of the proteins that bind and probably mediate the attachment of the 5S RNA into the large ribosomal subunit, where it forms part of the central protuberance. The polypeptide is Large ribosomal subunit protein uL18 (Methylobacillus flagellatus (strain ATCC 51484 / DSM 6875 / VKM B-1610 / KT)).